A 322-amino-acid chain; its full sequence is Thioredoxin reductase (322 aa).

FAD contacts are provided by residues 11-14, 40-41, Gln45, Asn54, Val87, and Cys145; these read SGPA and IA. The cysteines at positions 142 and 145 are disulfide-linked. The residue at position 192 (Ser192) is a Phosphoserine. Phosphothreonine is present on Thr278. Phosphoserine is present on Ser279. FAD is bound by residues Asp288 and 295-297; that span reads RQA.

Belongs to the class-II pyridine nucleotide-disulfide oxidoreductase family. As to quaternary structure, homodimer. It depends on FAD as a cofactor.

Its subcellular location is the cytoplasm. The enzyme catalyses [thioredoxin]-dithiol + NADP(+) = [thioredoxin]-disulfide + NADPH + H(+). This is Thioredoxin reductase (trr1) from Schizosaccharomyces pombe (strain 972 / ATCC 24843) (Fission yeast).